A 237-amino-acid chain; its full sequence is Proteasome subunit alpha type-5-B (237 aa).

M1 carries the N-acetylmethionine modification. Glycyl lysine isopeptide (Lys-Gly) (interchain with G-Cter in ubiquitin) cross-links involve residues K43, K66, and K185.

It belongs to the peptidase T1A family. As to quaternary structure, component of the 20S core complex of the 26S proteasome. The 26S proteasome is composed of a core protease (CP), known as the 20S proteasome, capped at one or both ends by the 19S regulatory particle (RP/PA700). The 20S proteasome core is composed of 28 subunits that are arranged in four stacked rings, resulting in a barrel-shaped structure. The two end rings are each formed by seven alpha subunits, and the two central rings are each formed by seven beta subunits. The catalytic chamber with the active sites is on the inside of the barrel.

It localises to the cytoplasm. The protein localises to the nucleus. Functionally, the proteasome is a multicatalytic proteinase complex which is characterized by its ability to cleave peptides with Arg, Phe, Tyr, Leu, and Glu adjacent to the leaving group at neutral or slightly basic pH. The proteasome has an ATP-dependent proteolytic activity. The sequence is that of Proteasome subunit alpha type-5-B (PAE2) from Arabidopsis thaliana (Mouse-ear cress).